Here is a 1217-residue protein sequence, read N- to C-terminus: Myosin-5 (1217 aa).

The span at 1-11 (MAILKRGARNK) shows a compositional bias: basic residues. Residues 1 to 24 (MAILKRGARNKTHQEPAKRGGNNI) are disordered. The Myosin motor domain maps to 37–716 (VGVSDLTLLT…TLFALENMRD (680 aa)). An ATP-binding site is contributed by 130–137 (GESGAGKT). A Phosphoserine modification is found at serine 358. An actin-binding region spans residues 405–487 (SIGILDIYGF…PGIFAAMNDS (83 aa)). 2 consecutive IQ domains span residues 720–740 (HNMA…RIDA) and 741–766 (AVKI…YGTS). One can recognise a TH1 domain in the interval 772 to 962 (KERRSMSLLG…TIFVRRGNPA (191 aa)). 3 disordered regions span residues 956–1102 (VRRG…NPSE), 1145–1174 (GAKA…AQTV), and 1197–1217 (NKMR…DDDW). A compositionally biased stretch (basic residues) spans 965 to 974 (KSKKKPRKKS). Over residues 976-987 (GMSAPTTQSSKT) the composition is skewed to polar residues. Residues 994-1007 (SSNNQNTTVSQSLN) show a composition bias toward low complexity. A compositionally biased stretch (pro residues) spans 1025 to 1038 (PAPPPPGSKKPAPQ). A compositionally biased stretch (low complexity) spans 1050 to 1071 (PQAQMQTQTQIPASQSSATQSS). Residues 1072-1081 (IPPPPPPPPS) are compositionally biased toward pro residues. Residues 1083 to 1145 (TSEPQFEAAY…PTAYMVKHEG (63 aa)) form the SH3 domain. The span at 1162-1174 (IQNQSQPASAQTV) shows a compositional bias: polar residues. Residues 1203 to 1217 (SDEEAAASSDNDDDW) show a composition bias toward acidic residues.

Belongs to the TRAFAC class myosin-kinesin ATPase superfamily. Myosin family. In terms of processing, phosphorylation of the TEDS site (Ser-358) is required for the polarization of the actin cytoskeleton. Phosphorylation probably activates the myosin-I ATPase activity.

It is found in the cytoplasm. It localises to the cytoskeleton. Its subcellular location is the actin patch. In terms of biological role, type-I myosin implicated in the organization of the actin cytoskeleton. Required for proper actin cytoskeleton polarization. At the cell cortex, assembles in patch-like structures together with proteins from the actin-polymerizing machinery and promotes actin assembly. Functions as actin nucleation-promoting factor (NPF) for the Arp2/3 complex. The protein is Myosin-5 (MYO5) of Candida glabrata (strain ATCC 2001 / BCRC 20586 / JCM 3761 / NBRC 0622 / NRRL Y-65 / CBS 138) (Yeast).